We begin with the raw amino-acid sequence, 365 residues long: 2-aminoethylphosphonate--pyruvate transaminase (365 aa).

Position 194 is an N6-(pyridoxal phosphate)lysine (K194).

Belongs to the class-V pyridoxal-phosphate-dependent aminotransferase family. PhnW subfamily. As to quaternary structure, homodimer. The cofactor is pyridoxal 5'-phosphate.

It catalyses the reaction (2-aminoethyl)phosphonate + pyruvate = phosphonoacetaldehyde + L-alanine. Functionally, involved in phosphonate degradation. This is 2-aminoethylphosphonate--pyruvate transaminase from Bacillus cereus (strain Q1).